The primary structure comprises 375 residues: Carbamoyl phosphate synthase small chain (375 aa).

Residues 1-184 form a CPSase region; it reads MVSLYLENGL…LDYKPFDEKT (184 aa). Residues serine 44, glycine 240, and glycine 242 each coordinate L-glutamine. Positions 188–375 constitute a Glutamine amidotransferase type-1 domain; the sequence is IIAVLDFGAK…KEFVELLKDF (188 aa). The active-site Nucleophile is cysteine 268. 4 residues coordinate L-glutamine: leucine 269, glutamine 272, asparagine 310, and tyrosine 313. Residues histidine 351 and glutamate 353 contribute to the active site.

Belongs to the CarA family. In terms of assembly, composed of two chains; the small (or glutamine) chain promotes the hydrolysis of glutamine to ammonia, which is used by the large (or ammonia) chain to synthesize carbamoyl phosphate. Tetramer of heterodimers (alpha,beta)4.

The catalysed reaction is hydrogencarbonate + L-glutamine + 2 ATP + H2O = carbamoyl phosphate + L-glutamate + 2 ADP + phosphate + 2 H(+). It catalyses the reaction L-glutamine + H2O = L-glutamate + NH4(+). The protein operates within amino-acid biosynthesis; L-arginine biosynthesis; carbamoyl phosphate from bicarbonate: step 1/1. Its pathway is pyrimidine metabolism; UMP biosynthesis via de novo pathway; (S)-dihydroorotate from bicarbonate: step 1/3. Small subunit of the glutamine-dependent carbamoyl phosphate synthetase (CPSase). CPSase catalyzes the formation of carbamoyl phosphate from the ammonia moiety of glutamine, carbonate, and phosphate donated by ATP, constituting the first step of 2 biosynthetic pathways, one leading to arginine and/or urea and the other to pyrimidine nucleotides. The small subunit (glutamine amidotransferase) binds and cleaves glutamine to supply the large subunit with the substrate ammonia. The chain is Carbamoyl phosphate synthase small chain from Helicobacter pylori (strain ATCC 700392 / 26695) (Campylobacter pylori).